A 242-amino-acid chain; its full sequence is Biosynthetic peptidoglycan transglycosylase (242 aa).

Residues 19–39 (LMVVLAVFWGGGIALFSVAPV) traverse the membrane as a helical segment.

This sequence belongs to the glycosyltransferase 51 family.

It localises to the cell inner membrane. The catalysed reaction is [GlcNAc-(1-&gt;4)-Mur2Ac(oyl-L-Ala-gamma-D-Glu-L-Lys-D-Ala-D-Ala)](n)-di-trans,octa-cis-undecaprenyl diphosphate + beta-D-GlcNAc-(1-&gt;4)-Mur2Ac(oyl-L-Ala-gamma-D-Glu-L-Lys-D-Ala-D-Ala)-di-trans,octa-cis-undecaprenyl diphosphate = [GlcNAc-(1-&gt;4)-Mur2Ac(oyl-L-Ala-gamma-D-Glu-L-Lys-D-Ala-D-Ala)](n+1)-di-trans,octa-cis-undecaprenyl diphosphate + di-trans,octa-cis-undecaprenyl diphosphate + H(+). It participates in cell wall biogenesis; peptidoglycan biosynthesis. Peptidoglycan polymerase that catalyzes glycan chain elongation from lipid-linked precursors. The protein is Biosynthetic peptidoglycan transglycosylase of Escherichia coli (strain 55989 / EAEC).